The sequence spans 584 residues: Putative adenine deaminase BA_3032/GBAA_3032/BAS2818 (584 aa).

Belongs to the metallo-dependent hydrolases superfamily. Adenine deaminase family.

The catalysed reaction is adenine + H2O + H(+) = hypoxanthine + NH4(+). In Bacillus anthracis, this protein is Putative adenine deaminase BA_3032/GBAA_3032/BAS2818.